We begin with the raw amino-acid sequence, 60 residues long: MAVPRRKTSPSRRGMRRSADALKRPTYAEDKDSGELRRPHHLDLKTGMYKGRQVIKKKDA.

Residues 1 to 16 (MAVPRRKTSPSRRGMR) show a composition bias toward basic residues. The tract at residues 1 to 60 (MAVPRRKTSPSRRGMRRSADALKRPTYAEDKDSGELRRPHHLDLKTGMYKGRQVIKKKDA) is disordered. The span at 17–44 (RSADALKRPTYAEDKDSGELRRPHHLDL) shows a compositional bias: basic and acidic residues.

Belongs to the bacterial ribosomal protein bL32 family.

This is Large ribosomal subunit protein bL32 from Rhodopseudomonas palustris (strain BisB5).